The chain runs to 44 residues: Defensin heliomicin (44 aa).

Cystine bridges form between cysteine 7–cysteine 32, cysteine 18–cysteine 40, and cysteine 22–cysteine 42.

Its subcellular location is the secreted. In terms of biological role, this peptide has potent anti-fungal activity. Has no activity against Gram-negative and Gram-positive bacteria. This Heliothis virescens (Tobacco budworm moth) protein is Defensin heliomicin.